Here is a 350-residue protein sequence, read N- to C-terminus: Protein-glutamate methylesterase/protein-glutamine glutaminase (350 aa).

Positions 5-122 (KVLCVDDSAL…RDGLIEYSEV (118 aa)) constitute a Response regulatory domain. At aspartate 56 the chain carries 4-aspartylphosphate. The region spanning 152 to 346 (PFASSEKLVI…ERILTRLGDR (195 aa)) is the CheB-type methylesterase domain. Catalysis depends on residues serine 165, histidine 191, and aspartate 288.

Belongs to the CheB family. In terms of processing, phosphorylated by CheA. Phosphorylation of the N-terminal regulatory domain activates the methylesterase activity.

The protein localises to the cytoplasm. The enzyme catalyses [protein]-L-glutamate 5-O-methyl ester + H2O = L-glutamyl-[protein] + methanol + H(+). It carries out the reaction L-glutaminyl-[protein] + H2O = L-glutamyl-[protein] + NH4(+). Functionally, involved in chemotaxis. Part of a chemotaxis signal transduction system that modulates chemotaxis in response to various stimuli. Catalyzes the demethylation of specific methylglutamate residues introduced into the chemoreceptors (methyl-accepting chemotaxis proteins or MCP) by CheR. Also mediates the irreversible deamidation of specific glutamine residues to glutamic acid. This Bordetella pertussis (strain Tohama I / ATCC BAA-589 / NCTC 13251) protein is Protein-glutamate methylesterase/protein-glutamine glutaminase.